Reading from the N-terminus, the 438-residue chain is Porin AaxA (438 aa).

Residues methionine 1–alanine 21 form the signal peptide.

The protein belongs to the OprB family.

The protein localises to the cell outer membrane. Facilitates L-arginine uptake, as part of the AaxABC system. The arginine uptake by the bacterium in the macrophage may be a virulence factor against the host innate immune response. The sequence is that of Porin AaxA (aaxA) from Chlamydia pneumoniae (Chlamydophila pneumoniae).